Consider the following 399-residue polypeptide: Nicotinate phosphoribosyltransferase 1 (399 aa).

A Phosphohistidine; by autocatalysis modification is found at His224.

This sequence belongs to the NAPRTase family. Transiently phosphorylated on a His residue during the reaction cycle. Phosphorylation strongly increases the affinity for substrates and increases the rate of nicotinate D-ribonucleotide production. Dephosphorylation regenerates the low-affinity form of the enzyme, leading to product release.

The catalysed reaction is nicotinate + 5-phospho-alpha-D-ribose 1-diphosphate + ATP + H2O = nicotinate beta-D-ribonucleotide + ADP + phosphate + diphosphate. It functions in the pathway cofactor biosynthesis; NAD(+) biosynthesis; nicotinate D-ribonucleotide from nicotinate: step 1/1. Catalyzes the synthesis of beta-nicotinate D-ribonucleotide from nicotinate and 5-phospho-D-ribose 1-phosphate at the expense of ATP. This chain is Nicotinate phosphoribosyltransferase 1, found in Pseudomonas aeruginosa (strain ATCC 15692 / DSM 22644 / CIP 104116 / JCM 14847 / LMG 12228 / 1C / PRS 101 / PAO1).